An 84-amino-acid chain; its full sequence is Large ribosomal subunit protein bL27 (84 aa).

Residues 1–21 (MAHKKAGGSTRNGRDSESKRL) are disordered.

The protein belongs to the bacterial ribosomal protein bL27 family.

This chain is Large ribosomal subunit protein bL27, found in Baumannia cicadellinicola subsp. Homalodisca coagulata.